We begin with the raw amino-acid sequence, 490 residues long: Cytochrome P450 2W1 (490 aa).

The first 22 residues, 1 to 22, serve as a signal peptide directing secretion; the sequence is MALLLLLFLGLLGLWGLLCACA. An N-linked (GlcNAc...) asparagine glycan is attached at Asn177. Cys433 contacts heme.

It belongs to the cytochrome P450 family. The cofactor is heme. As to expression, very low levels are detected in fetal and adult tissues. Highly expressed in several tumor samples, in particular colon and adrenal tumors.

The protein localises to the endoplasmic reticulum lumen. It localises to the cell membrane. It is found in the microsome membrane. The catalysed reaction is all-trans-retinoate + reduced [NADPH--hemoprotein reductase] + O2 = all-trans-4-hydroxyretinoate + oxidized [NADPH--hemoprotein reductase] + H2O + H(+). The enzyme catalyses 1-(9Z-octadecenoyl)-sn-glycero-3-phosphocholine + reduced [NADPH--hemoprotein reductase] + O2 = 1-[8-hydroxy-(9Z)-octadecenoyl]-sn-glycero-3-phosphocholine + oxidized [NADPH--hemoprotein reductase] + H2O + H(+). It carries out the reaction 1-(9Z-octadecenoyl)-sn-glycero-3-phosphocholine + reduced [NADPH--hemoprotein reductase] + O2 = 1-[11-hydroxy-(9Z)-octadecenoyl]-sn-glycero-3-phosphocholine + oxidized [NADPH--hemoprotein reductase] + H2O + H(+). It catalyses the reaction 1-(9Z-octadecenoyl)-sn-glycero-3-phosphocholine + reduced [NADPH--hemoprotein reductase] + O2 = 1-[(9S,10R)-epoxy-octadecanoyl]-sn-glycero-3-phosphocholine + oxidized [NADPH--hemoprotein reductase] + H2O + H(+). The catalysed reaction is 1-(9Z-octadecenoyl)-sn-glycero-3-phosphocholine + reduced [NADPH--hemoprotein reductase] + O2 = 1-[(9R,10S)-epoxy-octadecanoyl]-sn-glycero-3-phosphocholine + oxidized [NADPH--hemoprotein reductase] + H2O + H(+). A cytochrome P450 monooxygenase that may play a role in retinoid and phospholipid metabolism. Catalyzes the hydroxylation of saturated carbon hydrogen bonds. Hydroxylates all trans-retinoic acid (atRA) to 4-hydroxyretinoate and may regulate atRA clearance. Other retinoids such as all-trans retinol and all-trans retinal are potential endogenous substrates. Catalyzes both epoxidation of double bonds and hydroxylation of carbon hydrogen bonds of the fatty acyl chain of 1-acylphospholipids/2-lysophospholipids. Can metabolize various lysophospholipids classes including lysophosphatidylcholines (LPCs), lysophosphatidylinositols (LPIs), lysophosphatidylserines (LPSs), lysophosphatidylglycerols (LPGs), lysophosphatidylethanolamines (LPEs) and lysophosphatidic acids (LPAs). Has low or no activity toward 2-acylphospholipids/1-lysophospholipids, diacylphospholipids and free fatty acids. May play a role in tumorigenesis by activating procarcinogens such as aflatoxin B1, polycyclic aromatic hydrocarbon dihydrodiols and aromatic amines. Mechanistically, uses molecular oxygen inserting one oxygen atom into a substrate, and reducing the second into a water molecule, with two electrons provided by NADPH via cytochrome P450 reductase (CPR; NADPH-ferrihemoprotein reductase). In Homo sapiens (Human), this protein is Cytochrome P450 2W1.